Reading from the N-terminus, the 78-residue chain is MARITVEDCQERVDNRFLLVQMAIKRVHQYREGYEPLVESRNKEVVTALREIAAGKVLPDDDALYTPPAEQAAAVNEG.

Belongs to the RNA polymerase subunit omega family. In terms of assembly, the RNAP catalytic core consists of 2 alpha, 1 beta, 1 beta' and 1 omega subunit. When a sigma factor is associated with the core the holoenzyme is formed, which can initiate transcription.

It catalyses the reaction RNA(n) + a ribonucleoside 5'-triphosphate = RNA(n+1) + diphosphate. Promotes RNA polymerase assembly. Latches the N- and C-terminal regions of the beta' subunit thereby facilitating its interaction with the beta and alpha subunits. The protein is DNA-directed RNA polymerase subunit omega of Desulfovibrio desulfuricans (strain ATCC 27774 / DSM 6949 / MB).